The following is a 653-amino-acid chain: Asparagine--tRNA ligase, cytoplasmic (653 aa).

It belongs to the class-II aminoacyl-tRNA synthetase family.

The protein localises to the cytoplasm. The enzyme catalyses tRNA(Asn) + L-asparagine + ATP = L-asparaginyl-tRNA(Asn) + AMP + diphosphate + H(+). In Dictyostelium discoideum (Social amoeba), this protein is Asparagine--tRNA ligase, cytoplasmic (asnS1).